A 777-amino-acid chain; its full sequence is Aminopeptidase P (777 aa).

An N-terminal signal peptide occupies residues Met1–His17. His551 serves as a coordination point for substrate. 2 residues coordinate Mn(2+): Asp570 and Asp581. His640 is a substrate binding site. His644 lines the Mn(2+) pocket. His653 contacts substrate. Mn(2+) is bound by residues Glu676 and Glu690.

The protein belongs to the peptidase M24B family. In terms of assembly, homodimer. Mn(2+) serves as cofactor. In terms of processing, the N-terminus may be proteolytically cleaved to generate a 73-kDa mature form.

It localises to the vacuole lumen. Its subcellular location is the cytoplasm. The enzyme catalyses Release of any N-terminal amino acid, including proline, that is linked to proline, even from a dipeptide or tripeptide.. Partially activated by Co(2+) and Mg(2+) has no effect. Inhibited by 1 mM Zn(2+), Ni(2+), or Cu(2+). Inhibited by apstatin, a non-hydrolysable peptide analog. Catalyzes the removal of a penultimate prolyl residue from the N-termini of peptides. In the food vacuole, involved in the final step of host hemoglobin catabolism, by cleaving hemoglobin-derived oligopeptides. In the cytoplasm, may be involved in the last steps of the turnover of ubiquitinated proteins. The sequence is that of Aminopeptidase P from Plasmodium falciparum (isolate 3D7).